The primary structure comprises 220 residues: Probable glutathione S-transferase parA (220 aa).

The GST N-terminal domain maps to N4–C83. Residues S14, K41, I55, and E67–S68 contribute to the glutathione site. The region spanning D89–F209 is the GST C-terminal domain.

This sequence belongs to the GST superfamily. HSP26 family.

It catalyses the reaction RX + glutathione = an S-substituted glutathione + a halide anion + H(+). The chain is Probable glutathione S-transferase parA (PARA) from Nicotiana tabacum (Common tobacco).